We begin with the raw amino-acid sequence, 83 residues long: Non-muscle caldesmon (83 aa).

Composition is skewed to basic and acidic residues over residues 1 to 44 and 62 to 76; these read QTSE…KEEK and NQLK…KESK. Residues 1 to 63 form a myosin and calmodulin-binding region; the sequence is QTSEKEGRSE…PKPGSIEENQ (63 aa). The interval 1–83 is disordered; the sequence is QTSEKEGRSE…ESKNILSLCL (83 aa).

In terms of processing, in non-muscle cells, phosphorylation by CDC2 during mitosis causes caldesmon to dissociate from microfilaments. Phosphorylation reduces caldesmon binding to actin, myosin, and calmodulin as well as its inhibition of actomyosin ATPase activity. Phosphorylation also occurs in both quiescent and dividing smooth muscle cells with similar effects on the interaction with actin and calmodulin and on microfilaments reorganization.

Its subcellular location is the cytoplasm. The protein localises to the cytoskeleton. It localises to the myofibril. It is found in the stress fiber. In terms of biological role, actin- and myosin-binding protein implicated in the regulation of actomyosin interactions in smooth muscle and nonmuscle cells (could act as a bridge between myosin and actin filaments). Stimulates actin binding of tropomyosin which increases the stabilization of actin filament structure. In muscle tissues, inhibits the actomyosin ATPase by binding to F-actin. This inhibition is attenuated by calcium-calmodulin and is potentiated by tropomyosin. Interacts with actin, myosin, two molecules of tropomyosin and with calmodulin. Also plays an essential role during cellular mitosis and receptor capping. The polypeptide is Non-muscle caldesmon (CALD1) (Bos taurus (Bovine)).